A 280-amino-acid polypeptide reads, in one-letter code: 4-diphosphocytidyl-2-C-methyl-D-erythritol kinase (280 aa).

Residue K8 is part of the active site. 91–101 (PVSAGLAGGST) lines the ATP pocket. D133 is a catalytic residue.

It belongs to the GHMP kinase family. IspE subfamily.

It catalyses the reaction 4-CDP-2-C-methyl-D-erythritol + ATP = 4-CDP-2-C-methyl-D-erythritol 2-phosphate + ADP + H(+). It functions in the pathway isoprenoid biosynthesis; isopentenyl diphosphate biosynthesis via DXP pathway; isopentenyl diphosphate from 1-deoxy-D-xylulose 5-phosphate: step 3/6. Its function is as follows. Catalyzes the phosphorylation of the position 2 hydroxy group of 4-diphosphocytidyl-2C-methyl-D-erythritol. The sequence is that of 4-diphosphocytidyl-2-C-methyl-D-erythritol kinase from Clostridium botulinum (strain Alaska E43 / Type E3).